A 162-amino-acid chain; its full sequence is AP-1 complex subunit sigma-1 (162 aa).

The protein belongs to the adaptor complexes small subunit family. Adaptor protein complex 1 (AP-1) is a heterotetramer composed of two large adaptins (gamma-type subunit apl4 and beta-type subunit apl2), a medium adaptin (mu-type subunit apm1) and a small adaptin (sigma-type subunit aps1). AP-1 interacts with clathrin.

It is found in the cytoplasm. The protein resides in the nucleus. The protein localises to the cytoplasmic vesicle. It localises to the clathrin-coated vesicle membrane. Its subcellular location is the endosome. It is found in the golgi apparatus. Its function is as follows. Component of the AP-1 complex which links clathrin to receptors in coated vesicles. Clathrin-associated protein complexes are believed to interact with the cytoplasmic tails of membrane proteins, leading to their selection and concentration. This chain is AP-1 complex subunit sigma-1 (vas2), found in Schizosaccharomyces pombe (strain 972 / ATCC 24843) (Fission yeast).